A 376-amino-acid polypeptide reads, in one-letter code: Uroporphyrinogen decarboxylase (376 aa).

Residues Arg29–Arg33, Asp79, Tyr155, Ser210, and His342 contribute to the substrate site.

The protein belongs to the uroporphyrinogen decarboxylase family. As to quaternary structure, homodimer.

It is found in the cytoplasm. The enzyme catalyses uroporphyrinogen III + 4 H(+) = coproporphyrinogen III + 4 CO2. Its pathway is porphyrin-containing compound metabolism; protoporphyrin-IX biosynthesis; coproporphyrinogen-III from 5-aminolevulinate: step 4/4. Catalyzes the decarboxylation of four acetate groups of uroporphyrinogen-III to yield coproporphyrinogen-III. The sequence is that of Uroporphyrinogen decarboxylase from Paracidovorax citrulli (strain AAC00-1) (Acidovorax citrulli).